The chain runs to 198 residues: Glycerol-3-phosphate acyltransferase (198 aa).

Helical transmembrane passes span 2–22, 53–75, 79–98, 113–133, and 147–167; these read FITY…FALV, AGFI…PLIF, IHPL…PIFA, LLCY…TLLF, and IAAV…AMCL.

It belongs to the PlsY family. In terms of assembly, probably interacts with PlsX.

It is found in the cell membrane. It catalyses the reaction an acyl phosphate + sn-glycerol 3-phosphate = a 1-acyl-sn-glycero-3-phosphate + phosphate. The protein operates within lipid metabolism; phospholipid metabolism. Catalyzes the transfer of an acyl group from acyl-phosphate (acyl-PO(4)) to glycerol-3-phosphate (G3P) to form lysophosphatidic acid (LPA). This enzyme utilizes acyl-phosphate as fatty acyl donor, but not acyl-CoA or acyl-ACP. The polypeptide is Glycerol-3-phosphate acyltransferase (Bacillus cytotoxicus (strain DSM 22905 / CIP 110041 / 391-98 / NVH 391-98)).